We begin with the raw amino-acid sequence, 375 residues long: Monocyte differentiation antigen CD14 (375 aa).

A signal peptide spans 1 to 19; sequence MERASCLLLLLLPLVHVSA. 2 cysteine pairs are disulfide-bonded: Cys25/Cys36 and Cys34/Cys51. Residue Asn37 is glycosylated (N-linked (GlcNAc...) asparagine). LRR repeat units lie at residues 54-82, 83-118, 119-144, 145-172, 173-196, 197-224, 225-251, 252-278, 279-299, 300-321, and 322-349; these read AVEV…PRQY, ADTV…YSRL, KELT…GLAL, SSLR…KPGL, KVLS…FPAL, TSLD…FPAI, QNLA…GVQP, HSLD…SSAL, NSLN…PAKL, RVLD…LPEV, and DNLT…SGVV. Asn151 carries an N-linked (GlcNAc...) asparagine glycan. Disulfide bonds link Cys187–Cys217 and Cys241–Cys272. A glycan (N-linked (GlcNAc...) asparagine) is linked at Asn282. The required for response to bacterial lipopolysaccharide (LPS) stretch occupies residues 290 to 375; the sequence is QVPKGLPAKL…VLLQGARGFA (86 aa). Residue Asn323 is glycosylated (N-linked (GlcNAc...) asparagine). O-linked (GalNAc...) threonine glycosylation is present at Thr336. The GPI-anchor amidated asparagine moiety is linked to residue Asn345. The propeptide at 346-375 is removed in mature form; sequence SGVVPACARSTLSVGVSGTLVLLQGARGFA.

As to quaternary structure, interacts with LPS-bound LPB. Belongs to the lipopolysaccharide (LPS) receptor, a multi-protein complex containing at least CD14, LY96 and TLR4. Interacts with LPAR1. Interacts with the TLR2:TLR6 or TLR2:TLR1 heterodimers; upon interaction with ligands such as diacylated lipopeptides and triacylated lipopeptides, respectively. Interacts with MYO18A. Interacts with FSTL1. N- and O- glycosylated. O-glycosylated with a core 1 or possibly core 8 glycan. In terms of tissue distribution, detected on macrophages (at protein level). Expressed strongly on the surface of monocytes and weakly on the surface of granulocytes; also expressed by most tissue macrophages.

The protein localises to the cell membrane. It localises to the secreted. Its subcellular location is the membrane raft. It is found in the golgi apparatus. Its function is as follows. Coreceptor for bacterial lipopolysaccharide. In concert with LBP, binds to monomeric lipopolysaccharide and delivers it to the LY96/TLR4 complex, thereby mediating the innate immune response to bacterial lipopolysaccharide (LPS). Acts via MyD88, TIRAP and TRAF6, leading to NF-kappa-B activation, cytokine secretion and the inflammatory response. Acts as a coreceptor for TLR2:TLR6 heterodimer in response to diacylated lipopeptides and for TLR2:TLR1 heterodimer in response to triacylated lipopeptides, these clusters trigger signaling from the cell surface and subsequently are targeted to the Golgi in a lipid-raft dependent pathway. Binds electronegative LDL (LDL(-)) and mediates the cytokine release induced by LDL(-). The chain is Monocyte differentiation antigen CD14 (CD14) from Homo sapiens (Human).